The sequence spans 316 residues: UDP-N-acetylglucosamine transporter yea4 (316 aa).

The Cytoplasmic segment spans residues 1 to 3 (MIA). The chain crosses the membrane as a helical span at residues 4 to 24 (SALSFIFGGCCSNAYALEALV). Residues 25–31 (REFPSSG) are Lumenal-facing. The chain crosses the membrane as a helical span at residues 32–52 (ILITFSQFILITIEGLIYFLL). Residues 53-67 (NDVQSLKHPKVPRKR) lie on the Cytoplasmic side of the membrane. A helical transmembrane segment spans residues 68 to 88 (WFVVVVMFFAINVLNNVALGF). Residues 89–120 (DISVPVHIILRSSGPLTTMAVGRILAGKRYSS) are Lumenal-facing. A helical transmembrane segment spans residues 121 to 141 (LQIGSVFILTIGVIIATLGNA). At 142 to 153 (KDLHLHVESMTR) the chain is on the cytoplasmic side. Residues 154–174 (FGIGFTILVITQILGAIMGLV) traverse the membrane as a helical segment. Residues 175–187 (LENTYRIYGSDWR) are Lumenal-facing. A helical membrane pass occupies residues 188-208 (ESLFYTHALSLPFFLFLLRPI). At 209-214 (RSQWND) the chain is on the cytoplasmic side. Residues 215 to 235 (LFAIHTKGFLNLPSGVWYLCF) form a helical membrane-spanning segment. The Lumenal portion of the chain corresponds to 236-274 (NTLAQYFCVRGVNALGAETSALTVSVVLNVRKFVSLCLS). Residues 275 to 295 (LILFENEMGPAVKFGALLVFG) traverse the membrane as a helical segment. The Cytoplasmic segment spans residues 296–316 (SSAVYASARSKPKTNGLKKND).

Belongs to the nucleotide-sugar transporter family. SLC35B subfamily.

Its subcellular location is the endoplasmic reticulum. The protein localises to the endoplasmic reticulum membrane. Functionally, sugar transporter that specifically mediates the transport of UDP-N-acetylglucosamine (UDP-GlcNAc) and is required for cell wall chitin synthesis. In Schizosaccharomyces pombe (strain 972 / ATCC 24843) (Fission yeast), this protein is UDP-N-acetylglucosamine transporter yea4 (yea4).